We begin with the raw amino-acid sequence, 839 residues long: Flocculation protein FLO11 (839 aa).

The N-terminal stretch at 1–22 is a signal peptide; it reads MVSLRSIFTSSILAAGLTRAHG. The Flo11 1 domain occupies 24–194; the sequence is SGKTCPTSEV…PKKCSSDCGV (171 aa). 4 disulfide bridges follow: C28–C188, C37–C167, C129–C192, and C143–C152. The N-linked (GlcNAc...) asparagine glycan is linked to N79. A disordered region spans residues 187 to 342; that stretch reads KCSSDCGVEP…GPTCPTSEVS (156 aa). A compositionally biased stretch (acidic residues) spans 198-317; the sequence is TSDEPEEPTT…EPTTSEEPEE (120 aa). A Flo11 2 domain is found at 332-502; the sequence is EGPTCPTSEV…PKKCSSNCGV (171 aa). N387 carries N-linked (GlcNAc...) asparagine glycosylation. The disordered stretch occupies residues 496–606; sequence CSSNCGVEPT…LVPTTKTETD (111 aa). Acidic residues predominate over residues 506-592; sequence TSDEPEEPTT…PTTSDEEPGT (87 aa). Over residues 593 to 606 the composition is skewed to low complexity; sequence TEEPLVPTTKTETD.

It belongs to the flocculin family. Highly divergent.

Its function is as follows. Homophilic binding protein that enables kin discrimination in heterogeneous yeast populations by mediating homotypic cell-cell interactions during flocculation, a reversible and asexual process in which cells adhere to form aggregates (flocs). This is Flocculation protein FLO11 from Komagataella phaffii (strain GS115 / ATCC 20864) (Yeast).